A 155-amino-acid chain; its full sequence is 6,7-dimethyl-8-ribityllumazine synthase (155 aa).

5-amino-6-(D-ribitylamino)uracil-binding positions include Phe23, 57–59 (AFE), and 81–83 (AVI). Residue 86–87 (AT) coordinates (2S)-2-hydroxy-3-oxobutyl phosphate. His89 serves as the catalytic Proton donor. Phe114 contacts 5-amino-6-(D-ribitylamino)uracil. Arg128 lines the (2S)-2-hydroxy-3-oxobutyl phosphate pocket.

Belongs to the DMRL synthase family.

It carries out the reaction (2S)-2-hydroxy-3-oxobutyl phosphate + 5-amino-6-(D-ribitylamino)uracil = 6,7-dimethyl-8-(1-D-ribityl)lumazine + phosphate + 2 H2O + H(+). It participates in cofactor biosynthesis; riboflavin biosynthesis; riboflavin from 2-hydroxy-3-oxobutyl phosphate and 5-amino-6-(D-ribitylamino)uracil: step 1/2. Functionally, catalyzes the formation of 6,7-dimethyl-8-ribityllumazine by condensation of 5-amino-6-(D-ribitylamino)uracil with 3,4-dihydroxy-2-butanone 4-phosphate. This is the penultimate step in the biosynthesis of riboflavin. The protein is 6,7-dimethyl-8-ribityllumazine synthase of Pelotomaculum thermopropionicum (strain DSM 13744 / JCM 10971 / SI).